The primary structure comprises 411 residues: 2,3-bisphosphoglycerate-independent phosphoglycerate mutase 1 (411 aa).

Belongs to the BPG-independent phosphoglycerate mutase family. A-PGAM subfamily. In terms of assembly, homotetramer. Mg(2+) is required as a cofactor.

The catalysed reaction is (2R)-2-phosphoglycerate = (2R)-3-phosphoglycerate. Its pathway is carbohydrate degradation; glycolysis; pyruvate from D-glyceraldehyde 3-phosphate: step 3/5. Its activity is regulated as follows. Inhibited to approximately 20% by EDTA. Catalyzes the interconversion of 2-phosphoglycerate and 3-phosphoglycerate. In Methanocaldococcus jannaschii (strain ATCC 43067 / DSM 2661 / JAL-1 / JCM 10045 / NBRC 100440) (Methanococcus jannaschii), this protein is 2,3-bisphosphoglycerate-independent phosphoglycerate mutase 1 (apgM1).